Consider the following 539-residue polypeptide: Cytochrome P450 monooxygenase pvhE (539 aa).

Residues 15–31 (VAFCSLVILCILFKVLT) form a helical membrane-spanning segment. N-linked (GlcNAc...) asparagine glycosylation occurs at asparagine 379. Cysteine 473 provides a ligand contact to heme.

The protein belongs to the cytochrome P450 family. The cofactor is heme.

It is found in the membrane. Its pathway is secondary metabolite biosynthesis. In terms of biological role, cytochrome P450 monooxygenase; part of the gene cluster that mediates the biosynthesis of varicidin A, an antifungal natural product containing a cis-octahydrodecalin core. The PKS module of pvhA together with the enoylreductase pvhC catalyze the formation of the polyketide unit which is then conjugated to L-isoleucine by the condensation domain of the NRPS module. Activity of the Dieckmann cyclase domain (RED) of pvhA results in release of an acyclic tetramate. The cytochrome P450 monooxygenase pvhE then catalyzes the oxidation of the C21 methyl group to a to carboxylate group. The methyltransferase pvhD then further methylates the pvhE product. The Diels-Alderase pvhB is able to catalyze Diels-Alder cycloaddition using both pvhE and pvhD products as substrates to form the decalin ring, yielding varicidin B and A, respectively. The protein is Cytochrome P450 monooxygenase pvhE of Talaromyces variabilis (Penicillium variabile).